A 241-amino-acid polypeptide reads, in one-letter code: Uracil-DNA glycosylase (241 aa).

Aspartate 73 serves as the catalytic Proton acceptor.

This sequence belongs to the uracil-DNA glycosylase (UDG) superfamily. UNG family.

The protein resides in the cytoplasm. It carries out the reaction Hydrolyzes single-stranded DNA or mismatched double-stranded DNA and polynucleotides, releasing free uracil.. Its function is as follows. Excises uracil residues from the DNA which can arise as a result of misincorporation of dUMP residues by DNA polymerase or due to deamination of cytosine. In Agrobacterium fabrum (strain C58 / ATCC 33970) (Agrobacterium tumefaciens (strain C58)), this protein is Uracil-DNA glycosylase.